Consider the following 502-residue polypeptide: Putative diacyglycerol O-acyltransferase Rv1760 (502 aa).

H174 serves as the catalytic Proton acceptor.

This sequence belongs to the long-chain O-acyltransferase family.

It carries out the reaction an acyl-CoA + a 1,2-diacyl-sn-glycerol = a triacyl-sn-glycerol + CoA. The catalysed reaction is di-(9Z)-octadecenoylglycerol + (9Z)-octadecenoyl-CoA = 1,2,3-tri-(9Z-octadecenoyl)-glycerol + CoA. Its pathway is glycerolipid metabolism; triacylglycerol biosynthesis. In terms of biological role, catalyzes the terminal and only committed step in triacylglycerol synthesis by using diacylglycerol and fatty acyl CoA as substrates. Required for storage lipid synthesis. Functionally, upon expression in E.coli functions weakly as a triacylglycerol synthase, making triacylglycerol (TG) from diolein and long-chain fatty acyl-CoA. Has very weak wax synthase activity, incorporating palmityl alcohol into wax esters in the presence of palmitoyl-CoA. The protein is Putative diacyglycerol O-acyltransferase Rv1760 of Mycobacterium tuberculosis (strain ATCC 25618 / H37Rv).